Reading from the N-terminus, the 73-residue chain is Large ribosomal subunit protein bL31 (73 aa).

Residues Cys16, Cys18, Cys36, and Cys39 each contribute to the Zn(2+) site.

It belongs to the bacterial ribosomal protein bL31 family. Type A subfamily. Part of the 50S ribosomal subunit. Requires Zn(2+) as cofactor.

Functionally, binds the 23S rRNA. The sequence is that of Large ribosomal subunit protein bL31 from Citrifermentans bemidjiense (strain ATCC BAA-1014 / DSM 16622 / JCM 12645 / Bem) (Geobacter bemidjiensis).